The primary structure comprises 169 residues: Lutropin/choriogonadotropin subunit beta (169 aa).

Residues 1-20 form the signal peptide; that stretch reads MEMLQGLLLWMLLSVGGVWA. 6 cysteine pairs are disulfide-bonded: Cys29/Cys77, Cys43/Cys92, Cys46/Cys130, Cys54/Cys108, Cys58/Cys110, and Cys113/Cys120. A glycan (N-linked (GlcNAc...) asparagine) is linked at Asn33. The disordered stretch occupies residues 131 to 169; the sequence is APQTSSSCKDPPSQPLTSTSTPTPGASRRSSHPLPINTS. The span at 145–158 shows a compositional bias: low complexity; it reads PLTSTSTPTPGASR.

The protein belongs to the glycoprotein hormones subunit beta family. Heterodimer of a common alpha chain and a unique beta chain which confers biological specificity to thyrotropin, lutropin, follitropin and gonadotropin.

It is found in the secreted. Its function is as follows. Promotes spermatogenesis and ovulation by stimulating the testes and ovaries to synthesize steroids. This Equus asinus (Donkey) protein is Lutropin/choriogonadotropin subunit beta (LHB).